Consider the following 125-residue polypeptide: Cyclic diguanosine monophosphate-binding protein PA4608 (125 aa).

6 to 13 contributes to the 3',3'-c-di-GMP binding site; it reads DERRRFHR. The 97-residue stretch at 7–103 folds into the PilZ domain; that stretch reads ERRRFHRIAF…SISHLRRLVE (97 aa). Positions 9-13 match the RXXXR motif; surrounds the surface of the c-di-GMP binding site motif; the sequence is RRFHR. The short motif at 35 to 40 is the DXSXXG motif; surrounds the surface of the c-di-GMP binding site element; that stretch reads DVSLHG. Tryptophan 77 serves as a coordination point for 3',3'-c-di-GMP.

In terms of assembly, monomer in both c-di-GMP-bound and free forms.

Its function is as follows. Binds the second messenger bis-(3'-5') cyclic dimeric guanosine monophosphate (c-di-GMP). Can bind two c-di-GMP molecules per monomer. May play a role in bacterial second-messenger regulated processes. Binding to c-di-GMP induces a conformational change of the C- and N-termini resulting in the exposure of a highly negative surface on one side of the protein to a possible effector protein. In Pseudomonas aeruginosa (strain ATCC 15692 / DSM 22644 / CIP 104116 / JCM 14847 / LMG 12228 / 1C / PRS 101 / PAO1), this protein is Cyclic diguanosine monophosphate-binding protein PA4608.